Here is a 386-residue protein sequence, read N- to C-terminus: uncharacterized protein (386 aa).

The F-box domain occupies 29-76 (KYWKFLNEDCKIEVLKYLDYCSRCQLSICSKSDHKLVSITPLYVYEIE).

This is an uncharacterized protein from Caenorhabditis elegans.